Consider the following 769-residue polypeptide: CO(2)-response secreted protease (769 aa).

The signal sequence occupies residues 1–27 (MKGITFFTPFLSFLYLLCILFMTETEA). The Inhibitor I9 domain maps to 35–108 (VYIVYMGSAS…VFPDPHFQLH (74 aa)). The 502-residue stretch at 112 to 613 (SWDFLKYQTS…AGELSSTASM (502 aa)) folds into the Peptidase S8 domain. Residues Asp-145 and His-210 each act as charge relay system in the active site. One can recognise a PA domain in the interval 381-465 (ADASEGSARA…SKEAAEIFSY (85 aa)). The active-site Charge relay system is Ser-546.

The protein belongs to the peptidase S8 family. Expressed in roots, guard cells and meristemoid and pavement cells.

It is found in the secreted. It localises to the cell wall. It carries out the reaction Release of an N-terminal tripeptide from a polypeptide.. In terms of biological role, mediates CO(2)-controlled stomatal development by cleaving peptide EPF2 (AC Q8LC53). Not active on peptides EPF1 (AC Q8S8I4) or stomagen (AC Q9SV72). This Arabidopsis thaliana (Mouse-ear cress) protein is CO(2)-response secreted protease.